The sequence spans 123 residues: Galectin-2 (123 aa).

In terms of domain architecture, Galectin spans 4 to 123 (KVEIMNMDMK…LRYLSVQGGF (120 aa)). Residue 65–71 (WGKEQRD) participates in a beta-D-galactoside binding.

As to quaternary structure, homodimer.

This protein binds beta-galactoside. Its physiological function is not yet known. The polypeptide is Galectin-2 (LGALS2) (Sus scrofa (Pig)).